The primary structure comprises 414 residues: 5-aminolevulinate synthase (414 aa).

3 residues coordinate substrate: R22, S133, and K152. Pyridoxal 5'-phosphate contacts are provided by S185, H213, and T241. The active site involves K244. Residue K244 is modified to N6-(pyridoxal phosphate)lysine. T273 and T274 together coordinate pyridoxal 5'-phosphate. T359 is a substrate binding site.

Belongs to the class-II pyridoxal-phosphate-dependent aminotransferase family. In terms of assembly, homodimer. Pyridoxal 5'-phosphate serves as cofactor.

It catalyses the reaction succinyl-CoA + glycine + H(+) = 5-aminolevulinate + CO2 + CoA. It functions in the pathway porphyrin-containing compound metabolism; protoporphyrin-IX biosynthesis; 5-aminolevulinate from glycine: step 1/1. The polypeptide is 5-aminolevulinate synthase (hemA) (Rickettsia felis (strain ATCC VR-1525 / URRWXCal2) (Rickettsia azadi)).